The primary structure comprises 459 residues: Hemopexin (459 aa).

Positions 1–23 are cleaved as a signal peptide; that stretch reads MARALRVPVALWLLGLCWSLAKA. 3 disulfides stabilise this stretch: cysteine 52-cysteine 232, cysteine 150-cysteine 155, and cysteine 189-cysteine 201. 4 Hemopexin repeats span residues 55–95, 96–140, 141–185, and 186–232; these read GWGF…WKDA, PSPV…FPGI, PFPL…SWPA, and VGNC…FMSC. Histidine 81 contacts heme. Histidine 151 contributes to the heme binding site. Residue asparagine 188 is glycosylated (N-linked (GlcNAc...) asparagine). N-linked (GlcNAc...) asparagine glycosylation is present at asparagine 218. Histidine 237 contributes to the heme binding site. The N-linked (GlcNAc...) asparagine glycan is linked to asparagine 241. Intrachain disulfides connect cysteine 250-cysteine 453, cysteine 359-cysteine 401, and cysteine 411-cysteine 428. 4 Hemopexin repeats span residues 252–297, 298–345, 350–389, and 393–444; these read PHLV…WPQG, PSTV…FGSP, LHSVDAAFTCPGSSQLYIMAGQKLWRLDLNLGAQATWTEL, and HTKV…LPQA. Position 286 (histidine 286) interacts with heme.

This sequence belongs to the hemopexin family.

It is found in the secreted. Functionally, binds heme and transports it to the liver for breakdown and iron recovery, after which the free hemopexin returns to the circulation. The sequence is that of Hemopexin (HPX) from Bos taurus (Bovine).